Consider the following 131-residue polypeptide: MKFISRLLVACSLLIGLMGFLGADLAQALTPNPILAELNAVDAKLTTDFGQKIDLNNSDIRDFRGLRGFYPNLASEIIKNAPYDTVEEVLDIPGLSETQKSRLEANLGSFTVTEPSIELTSGDDRINPGVY.

The signal sequence occupies residues 1 to 28; the sequence is MKFISRLLVACSLLIGLMGFLGADLAQA. The propeptide occupies 29–36; it reads LTPNPILA.

This sequence belongs to the PsbU family. In terms of assembly, PSII is composed of 1 copy each of membrane proteins PsbA, PsbB, PsbC, PsbD, PsbE, PsbF, PsbH, PsbI, PsbJ, PsbK, PsbL, PsbM, PsbT, PsbX, PsbY, PsbZ, Psb30/Ycf12, peripheral proteins PsbO, CyanoQ (PsbQ), PsbU, PsbV and a large number of cofactors. It forms dimeric complexes.

It is found in the cellular thylakoid membrane. One of the extrinsic, lumenal subunits of photosystem II (PSII). PSII is a light-driven water plastoquinone oxidoreductase, using light energy to abstract electrons from H(2)O, generating a proton gradient subsequently used for ATP formation. The extrinsic proteins stabilize the structure of photosystem II oxygen-evolving complex (OEC), the ion environment of oxygen evolution and protect the OEC against heat-induced inactivation. May modulate the Cl(-) requirement for oxygen evolution. The chain is Photosystem II extrinsic protein U from Synechocystis sp. (strain ATCC 27184 / PCC 6803 / Kazusa).